Here is a 303-residue protein sequence, read N- to C-terminus: Probable 5-dehydro-4-deoxyglucarate dehydratase (303 aa).

Belongs to the DapA family.

It catalyses the reaction 5-dehydro-4-deoxy-D-glucarate + H(+) = 2,5-dioxopentanoate + CO2 + H2O. It participates in carbohydrate acid metabolism; D-glucarate degradation; 2,5-dioxopentanoate from D-glucarate: step 2/2. In Azotobacter vinelandii (strain DJ / ATCC BAA-1303), this protein is Probable 5-dehydro-4-deoxyglucarate dehydratase.